A 185-amino-acid polypeptide reads, in one-letter code: Elongation factor P (185 aa).

This sequence belongs to the elongation factor P family.

Its subcellular location is the cytoplasm. It participates in protein biosynthesis; polypeptide chain elongation. Functionally, involved in peptide bond synthesis. Stimulates efficient translation and peptide-bond synthesis on native or reconstituted 70S ribosomes in vitro. Probably functions indirectly by altering the affinity of the ribosome for aminoacyl-tRNA, thus increasing their reactivity as acceptors for peptidyl transferase. The protein is Elongation factor P of Finegoldia magna (strain ATCC 29328 / DSM 20472 / WAL 2508) (Peptostreptococcus magnus).